The sequence spans 321 residues: tRNA U34 carboxymethyltransferase (321 aa).

Carboxy-S-adenosyl-L-methionine contacts are provided by residues lysine 90, tryptophan 104, lysine 109, glycine 129, 151-153 (DPT), 180-181 (IE), methionine 195, tyrosine 199, and arginine 314.

Belongs to the class I-like SAM-binding methyltransferase superfamily. CmoB family. As to quaternary structure, homotetramer.

It catalyses the reaction carboxy-S-adenosyl-L-methionine + 5-hydroxyuridine(34) in tRNA = 5-carboxymethoxyuridine(34) in tRNA + S-adenosyl-L-homocysteine + H(+). Catalyzes carboxymethyl transfer from carboxy-S-adenosyl-L-methionine (Cx-SAM) to 5-hydroxyuridine (ho5U) to form 5-carboxymethoxyuridine (cmo5U) at position 34 in tRNAs. In Haemophilus influenzae (strain ATCC 51907 / DSM 11121 / KW20 / Rd), this protein is tRNA U34 carboxymethyltransferase.